A 629-amino-acid chain; its full sequence is tRNA uridine 5-carboxymethylaminomethyl modification enzyme MnmG (629 aa).

Position 4–9 (4–9) interacts with FAD; the sequence is GGGHAG. 268 to 282 is an NAD(+) binding site; it reads GPRYCPSIEDKVNRF.

The protein belongs to the MnmG family. In terms of assembly, homodimer. Heterotetramer of two MnmE and two MnmG subunits. The cofactor is FAD.

The protein localises to the cytoplasm. NAD-binding protein involved in the addition of a carboxymethylaminomethyl (cmnm) group at the wobble position (U34) of certain tRNAs, forming tRNA-cmnm(5)s(2)U34. The chain is tRNA uridine 5-carboxymethylaminomethyl modification enzyme MnmG from Helicobacter hepaticus (strain ATCC 51449 / 3B1).